Here is an 860-residue protein sequence, read N- to C-terminus: Leucine--tRNA ligase (860 aa).

The 'HIGH' region motif lies at 42 to 52; the sequence is PYPSGRLHMGH. The short motif at 619-623 is the 'KMSKS' region element; sequence KMSKS. An ATP-binding site is contributed by Lys622.

The protein belongs to the class-I aminoacyl-tRNA synthetase family.

The protein resides in the cytoplasm. The catalysed reaction is tRNA(Leu) + L-leucine + ATP = L-leucyl-tRNA(Leu) + AMP + diphosphate. The protein is Leucine--tRNA ligase of Mannheimia succiniciproducens (strain KCTC 0769BP / MBEL55E).